A 116-amino-acid chain; its full sequence is Large ribosomal subunit protein bL19 (116 aa).

Belongs to the bacterial ribosomal protein bL19 family.

Functionally, this protein is located at the 30S-50S ribosomal subunit interface and may play a role in the structure and function of the aminoacyl-tRNA binding site. The chain is Large ribosomal subunit protein bL19 from Blochmanniella pennsylvanica (strain BPEN).